Here is a 145-residue protein sequence, read N- to C-terminus: ATP synthase epsilon chain (145 aa).

This sequence belongs to the ATPase epsilon chain family. In terms of assembly, F-type ATPases have 2 components, CF(1) - the catalytic core - and CF(0) - the membrane proton channel. CF(1) has five subunits: alpha(3), beta(3), gamma(1), delta(1), epsilon(1). CF(0) has three main subunits: a, b and c.

It is found in the cell inner membrane. Functionally, produces ATP from ADP in the presence of a proton gradient across the membrane. The polypeptide is ATP synthase epsilon chain (Francisella tularensis subsp. tularensis (strain FSC 198)).